Here is a 1621-residue protein sequence, read N- to C-terminus: MSSIPTPPDANGNPLIALAVAVIYAILYVLQGVKYGVSLLTIGIPSCIVRMLQYSLTISLGFPHLLALFAGALLALFFLIRYRYLTRYAQLKESALPPPSPPALASRLLPLDGDGLGLPDSRSQTSSFHNYLDDFLSAIRIFGYLEKPVFHELSRHLQTRRLAAGDTLEIGGGEFWCVVEGKVQVFAPDASSQGTPTPSSDTNSPTRPSFNGYHLLNEVSTGGTLSSLFSILSLFTEDIKLSWKSSADDEGEEEQIFEGAPEQSSAKLRVRRANSDVSQLGPDSIGVRAMDPTPLPESIDSHGDSSVPQRRRERSSSIDAAGETVREREGIFASASLPISSTEPPSPRRSQSLRSSPRLNSATNLLSSQSEHLRSSVPRKAGIEIGSKALKGTIARATEDTTLAVIPAAAFRKLTRKFPKASGTIVQVVLERFSRVTFMTAHKYLGLTREILQTESSLNLLVTHPLPRSFYTGGGMQALRARFQPEALAKESVHYDSLKSSPNARVSSKDYFNYVPASPTVKAPSLPAMTPKPLSPIIHKSSLGQTATTTVKNEPLNGGSSPLDETRDKVPSFGLSTAAATNPDASFRHASPFIRRTSAMRQQVAAGDLAMSVHNLPDESGQAYYRPTAITPGLSKMDTWQRRYSSSWNLNDSPHTDGQPVDPQRDDESLLNESFDLKEAVLNSIAKSIGLYQEAESNSDMIARSSMAPSVSALSTPNSPMFPPNAGTPLQGSTRSRPPHFGNVLDLINASSQNEGVIGGMLREAAFNSRPDDEASSISMSLHDSQGGASGVDRKIMKDLERHVEILFFKKGSVLVKEGERSPGMYYVIDGFLETSLPFRSTSSNQENPNSTPGSKHRQSSFGSSNERPFKTALGLDTSKGKELDDGSKKDEALFTVKPGGIAGYLSSLCCTDSYVDITAKTDCFVGFLPHHTLERIIERRPIVLLTLAKRLLSLLSPLVLHIDAALDWQQLNAGQVLYEKGDKSTDFYIVINGRLRAFTEKNDNMHVLREYGQNDSIGELDVITAVDRSETVHAIRDSELVRIPAALFDAISIKHPETTVQFMRLIAGRVRRALGDEMNGRVPGLPTTDMNLKTVCVLGSTRNVPVTQFAGKLKNALEEIGASTSYLDQGIVMRHLGRHAFARIGKLKVAGWLADQEQHYRTVLYVADSPPASQWTLTCIRQADLVLVVSMGDDPSLGEYEKLLLATKTTARKELILLHDERTVAPGSTRQWLSNRPWIQTHYHVELPGVVTPARPIPPVHDAAAIAAFKHLREQVETRIKKYRGLRPFTRPRRPPHMNDFARIARRLCGQQIGLVLGGGGARGISHIGMLQALEEFGIPIDAIGGCSIGSFVGGLYARETDLLETAGRTKQFSGRMGSMWRILSDVTYPFVSYTTGHEFNRGIYKAFYNTHIEDFWIPFFANSTNITHSRMEVHRTGYAWRYVRASMTLAGLLPPLSDNGNLLVDGGYMDNTPIQPLRENGIRDIIVVDVGSVDDTSPRDYGDSVSGWWIFFNRFNPFYERRVLSMTEISSRLTYVSSVKTLEGVKATPGCHYIAMPVQQFDTLGGFKRFSEVMEIGLKAGRETLKKWKEEGKLPTGLVDEAKGSKAVQRGNRLRRMSI.

The Cytoplasmic portion of the chain corresponds to 1–12; the sequence is MSSIPTPPDANG. The chain crosses the membrane as a helical span at residues 13–33; it reads NPLIALAVAVIYAILYVLQGV. Residues 34–59 are Lumenal-facing; that stretch reads KYGVSLLTIGIPSCIVRMLQYSLTIS. A helical membrane pass occupies residues 60 to 80; it reads LGFPHLLALFAGALLALFFLI. Over 81–1621 the chain is Cytoplasmic; the sequence is RYRYLTRYAQ…RGNRLRRMSI (1541 aa). 7 disordered regions span residues 188-209, 250-379, 545-566, 648-667, 711-735, 772-791, and 839-870; these read PDAS…TRPS, EGEE…SVPR, QTAT…LDET, WNLN…QRDD, VSAL…GSTR, DDEA…GASG, and FRST…ERPF. Low complexity-rich tracts occupy residues 195–209 and 348–361; these read TPTP…TRPS and RRSQ…RLNS. A nucleoside 3',5'-cyclic phosphate-binding positions include 788 to 907 and 951 to 1070; these read GASG…GYLS and RLLS…IAGR. The segment covering 839–867 has biased composition (polar residues); it reads FRSTSSNQENPNSTPGSKHRQSSFGSSNE. One can recognise a PNPLA domain in the interval 1316–1480; the sequence is LVLGGGGARG…MDNTPIQPLR (165 aa). The GXGXXG motif lies at 1320–1325; sequence GGGARG. The short motif at 1347–1351 is the GXSXG element; that stretch reads GCSIG. Catalysis depends on serine 1349, which acts as the Nucleophile. Aspartate 1467 functions as the Proton acceptor in the catalytic mechanism. The DGA/G motif lies at 1467–1469; that stretch reads DGG.

Belongs to the NTE family.

Its subcellular location is the endoplasmic reticulum membrane. The catalysed reaction is a 1-acyl-sn-glycero-3-phosphocholine + H2O = sn-glycerol 3-phosphocholine + a fatty acid + H(+). Inhibited by organophosphorus esters. In terms of biological role, intracellular phospholipase B that catalyzes the double deacylation of phosphatidylcholine (PC) to glycerophosphocholine (GroPCho). Plays an important role in membrane lipid homeostasis. Responsible for the rapid PC turnover in response to inositol, elevated temperatures, or when choline is present in the growth medium. The polypeptide is Lysophospholipase NTE1 (NTE1) (Cryptococcus neoformans var. neoformans serotype D (strain B-3501A) (Filobasidiella neoformans)).